Consider the following 274-residue polypeptide: Undecaprenyl-diphosphatase 2 (274 aa).

6 helical membrane passes run 47-64, 82-102, 110-130, 185-205, 219-239, and 249-269; these read VFVIVIQLGAILAVCWEY, WKFVTNLLIAFLPAVVLGLTF, LFSPVPVATAFIVGGLVILWA, ATEFSFFLAIPTLTAASLYDL, LMAVGFVVSFLSALVAVRGLI, and VFAWYRIAFGLVVLATAWSGL.

This sequence belongs to the UppP family.

The protein localises to the cell inner membrane. The catalysed reaction is di-trans,octa-cis-undecaprenyl diphosphate + H2O = di-trans,octa-cis-undecaprenyl phosphate + phosphate + H(+). Catalyzes the dephosphorylation of undecaprenyl diphosphate (UPP). Confers resistance to bacitracin. The sequence is that of Undecaprenyl-diphosphatase 2 from Rhodospirillum rubrum (strain ATCC 11170 / ATH 1.1.1 / DSM 467 / LMG 4362 / NCIMB 8255 / S1).